Reading from the N-terminus, the 126-residue chain is Chorion class B protein M1768 (126 aa).

Residues 1 to 17 (YGGLGYGGLGGGCGRGF) form a left arm region. Positions 18–86 (SGGGLPVATA…GNGAVGITRE (69 aa)) are central domain. The segment at 87–126 (GGFGYGAGYGDGYGLGFGGYGGGYGLGYGGYGGCGCSWGY) is right arm (Gly-rich tandem repeats).

It belongs to the chorion protein family.

This protein is one of many from the eggshell of the silk moth. The sequence is that of Chorion class B protein M1768 from Bombyx mori (Silk moth).